Reading from the N-terminus, the 560-residue chain is uncharacterized protein (560 aa).

The N-terminal stretch at 1 to 29 (MKSALKKSVVSTSISLILASGMAAFAAHA) is a signal peptide. Ca(2+) is bound by residues aspartate 66, aspartate 67, and serine 132. Serine 132 acts as the Nucleophile in catalysis. Serine 132 is modified (3-oxoalanine (Ser)). Residue histidine 185 is part of the active site. 2 residues coordinate Ca(2+): aspartate 345 and asparagine 346.

The protein belongs to the sulfatase family. Ca(2+) serves as cofactor. Post-translationally, the conversion to 3-oxoalanine (also known as C-formylglycine, FGly), of a serine or cysteine residue in prokaryotes and of a cysteine residue in eukaryotes, is critical for catalytic activity.

This is an uncharacterized protein from Escherichia coli (strain K12).